The primary structure comprises 130 residues: Protein ApaG (130 aa).

The ApaG domain maps to serine 3 to glutamine 127.

The polypeptide is Protein ApaG (Beijerinckia indica subsp. indica (strain ATCC 9039 / DSM 1715 / NCIMB 8712)).